We begin with the raw amino-acid sequence, 244 residues long: Small ribosomal subunit protein uS3 (244 aa).

The 69-residue stretch at 38 to 106 (IRKYLNARLA…DIQINIFEVK (69 aa)) folds into the KH type-2 domain. The tract at residues 217–244 (TQSKESGRGNNGGNNGGGKNFKRKKNNR) is disordered. Gly residues predominate over residues 225-235 (GNNGGNNGGGK).

It belongs to the universal ribosomal protein uS3 family. In terms of assembly, part of the 30S ribosomal subunit. Forms a tight complex with proteins S10 and S14.

Binds the lower part of the 30S subunit head. Binds mRNA in the 70S ribosome, positioning it for translation. This Bacteroides fragilis (strain ATCC 25285 / DSM 2151 / CCUG 4856 / JCM 11019 / LMG 10263 / NCTC 9343 / Onslow / VPI 2553 / EN-2) protein is Small ribosomal subunit protein uS3.